Consider the following 136-residue polypeptide: Histone H3 (136 aa).

The segment at 1 to 43 is disordered; sequence MARTKQTARKSTGGKAPRKQLASKAARKSAPSTGGVKKPHRYK. 2 positions are modified to N6,N6,N6-trimethyllysine; alternate: Lys-5 and Lys-10. N6,N6-dimethyllysine; alternate is present on Lys-5. The residue at position 5 (Lys-5) is an N6-methyllysine; alternate. An N6-acetyllysine; alternate modification is found at Lys-10. Ser-11 bears the Phosphoserine mark. Lys-15 carries the N6,N6-dimethyllysine; alternate modification. Lys-15, Lys-19, Lys-24, Lys-28, and Lys-37 each carry N6-methyllysine; alternate. 5 positions are modified to N6-acetyllysine; alternate: Lys-15, Lys-19, Lys-24, Lys-28, and Lys-37. Residues Lys-28 and Lys-37 each carry the N6,N6,N6-trimethyllysine; alternate modification. An N6,N6-dimethyllysine; alternate mark is found at Lys-28 and Lys-37. N6-acetyllysine occurs at positions 57 and 65. Lys-80 is subject to N6,N6,N6-trimethyllysine; alternate. Residue Lys-80 is modified to N6,N6-dimethyllysine; alternate. Residue Lys-80 is modified to N6-methyllysine; alternate.

Belongs to the histone H3 family. As to quaternary structure, the nucleosome is a histone octamer containing two molecules each of H2A, H2B, H3 and H4 assembled in one H3-H4 heterotetramer and two H2A-H2B heterodimers. The octamer wraps approximately 147 bp of DNA. In terms of processing, phosphorylated to form H3S10ph. H3S10ph promotes subsequent H3K14ac formation and is required for transcriptional activation through TBP recruitment to the promoters. Post-translationally, mono-, di- and trimethylated by the COMPASS complex to form H3K4me1/2/3. H3K4me activates gene expression by regulating transcription elongation and plays a role in telomere length maintenance. H3K4me enrichment correlates with transcription levels, and occurs in a 5' to 3' gradient with H3K4me3 enrichment at the 5'-end of genes, shifting to H3K4me2 and then H3K4me1. Trimethylated by methyltransferase dim-5 to form H3K9me3. H3K9me3, but not H3K9me2, marks chromatin regions for cytosine methylation. Methylated by set-2 to form H3K36me. H3K36me represses gene expression. Methylated by dot-1 to form H3K79me. H3K79me is required for association of SIR proteins with telomeric regions and for telomeric silencing. The COMPASS-mediated formation of H3K4me2/3 and the dot-1-mediated formation of H3K79me require H2BK123ub1. Acetylation of histone H3 leads to transcriptional activation. H3K14ac formation by gcn-5 is promoted by H3S10ph. H3K14ac can also be formed by esa-1. H3K56ac formation occurs predominantly in newly synthesized H3 molecules during G1, S and G2/M of the cell cycle and may be involved in DNA repair.

The protein localises to the nucleus. The protein resides in the chromosome. Its function is as follows. Core component of nucleosome. Nucleosomes wrap and compact DNA into chromatin, limiting DNA accessibility to the cellular machineries which require DNA as a template. Histones thereby play a central role in transcription regulation, DNA repair, DNA replication and chromosomal stability. DNA accessibility is regulated via a complex set of post-translational modifications of histones, also called histone code, and nucleosome remodeling. The sequence is that of Histone H3 (hh3) from Neurospora crassa (strain ATCC 24698 / 74-OR23-1A / CBS 708.71 / DSM 1257 / FGSC 987).